Consider the following 199-residue polypeptide: FMN-dependent NADH:quinone oxidoreductase (199 aa).

Position 10 (Ser10) interacts with FMN.

It belongs to the azoreductase type 1 family. Homodimer. FMN serves as cofactor.

The enzyme catalyses 2 a quinone + NADH + H(+) = 2 a 1,4-benzosemiquinone + NAD(+). The catalysed reaction is N,N-dimethyl-1,4-phenylenediamine + anthranilate + 2 NAD(+) = 2-(4-dimethylaminophenyl)diazenylbenzoate + 2 NADH + 2 H(+). In terms of biological role, quinone reductase that provides resistance to thiol-specific stress caused by electrophilic quinones. Its function is as follows. Also exhibits azoreductase activity. Catalyzes the reductive cleavage of the azo bond in aromatic azo compounds to the corresponding amines. This is FMN-dependent NADH:quinone oxidoreductase from Cellvibrio japonicus (strain Ueda107) (Pseudomonas fluorescens subsp. cellulosa).